We begin with the raw amino-acid sequence, 629 residues long: Probable potassium transport system protein Kup 3 (629 aa).

12 helical membrane-spanning segments follow: residues 20–40 (LSLS…LYTF), 61–81 (VSLI…SFAL), 106–126 (PFII…GTIT), 143–163 (PSLK…LFAI), 171–191 (IGKA…ILGA), 212–232 (FLFS…LCVT), 253–273 (WFGL…ALVL), 291–311 (FLLP…QAII), 343–363 (IYIG…TIGF), 372–392 (AYGI…FIAL), 400–420 (IITS…FFAA), and 425–445 (FING…MMYI).

This sequence belongs to the HAK/KUP transporter (TC 2.A.72) family.

Its subcellular location is the cell inner membrane. The enzyme catalyses K(+)(in) + H(+)(in) = K(+)(out) + H(+)(out). Its function is as follows. Transport of potassium into the cell. Likely operates as a K(+):H(+) symporter. This chain is Probable potassium transport system protein Kup 3, found in Legionella pneumophila (strain Lens).